The following is a 71-amino-acid chain: MKLTCVVIVAVLLLTACQLLTADDSRGTQKHRALRSDTKLSMSTRCKGKGASCSRTMYNCCTGSCNRGKCG.

The first 22 residues, 1 to 22 (MKLTCVVIVAVLLLTACQLLTA), serve as a signal peptide directing secretion. A propeptide spanning residues 23–45 (DDSRGTQKHRALRSDTKLSMSTR) is cleaved from the precursor. 3 disulfides stabilise this stretch: cysteine 46–cysteine 61, cysteine 53–cysteine 65, and cysteine 60–cysteine 70. Cysteine 70 carries the cysteine amide modification.

It belongs to the conotoxin O1 superfamily. Expressed by the venom duct.

It is found in the secreted. Its function is as follows. Omega-conotoxins act at presynaptic membranes, they bind and block voltage-gated calcium channels (Cav). The chain is Omega-conotoxin-like Ac6.4 from Conus achatinus (Little frog cone).